Reading from the N-terminus, the 329-residue chain is RNA-binding protein CP33, chloroplastic (329 aa).

Residues 1 to 69 (MSSAYCSSAV…NIRRHRFFCA (69 aa)) constitute a chloroplast transit peptide. The span at 77–104 (ADDEIQASVEEEEEVEEEGDEGEEEVEE) shows a compositional bias: acidic residues. Disordered stretches follow at residues 77-117 (ADDE…EEGR) and 296-329 (SERE…NVSA). 2 RRM domains span residues 116 to 194 (GRLY…FPEV) and 219 to 297 (HKVY…LASE).

It is found in the plastid. The protein localises to the chloroplast. Its function is as follows. Could be involved in splicing and/or processing of chloroplast RNAs. The protein is RNA-binding protein CP33, chloroplastic of Arabidopsis thaliana (Mouse-ear cress).